A 565-amino-acid chain; its full sequence is Oxygen-dependent choline dehydrogenase (565 aa).

7–36 (DYIICGAGSAGNVLATRLTEDPGVTVLLLE) contacts FAD. H474 serves as the catalytic Proton acceptor.

This sequence belongs to the GMC oxidoreductase family. FAD serves as cofactor.

The enzyme catalyses choline + A = betaine aldehyde + AH2. It catalyses the reaction betaine aldehyde + NAD(+) + H2O = glycine betaine + NADH + 2 H(+). It functions in the pathway amine and polyamine biosynthesis; betaine biosynthesis via choline pathway; betaine aldehyde from choline (cytochrome c reductase route): step 1/1. In terms of biological role, involved in the biosynthesis of the osmoprotectant glycine betaine. Catalyzes the oxidation of choline to betaine aldehyde and betaine aldehyde to glycine betaine at the same rate. The protein is Oxygen-dependent choline dehydrogenase of Burkholderia mallei (strain ATCC 23344).